A 245-amino-acid polypeptide reads, in one-letter code: Transcriptional regulatory protein YpdB (245 aa).

The Response regulatory domain occupies 2–116 (KVIIVEDEFL…RITGMLQKLE (115 aa)). Residue aspartate 53 is modified to 4-aspartylphosphate. The region spanning 140–245 (INLVKDERII…VKEFRQLMHL (106 aa)) is the HTH LytTR-type domain.

Post-translationally, phosphorylated by YpdA.

The protein localises to the cytoplasm. Its function is as follows. Member of the two-component regulatory system YpdA/YpdB. YpdB regulates expression of yhjX by binding to its promoter region. The protein is Transcriptional regulatory protein YpdB (ypdB) of Escherichia coli O6:H1 (strain CFT073 / ATCC 700928 / UPEC).